Here is a 491-residue protein sequence, read N- to C-terminus: UDP-N-acetylmuramate--L-alanine ligase (491 aa).

126 to 132 (GTHGKTT) is a binding site for ATP.

It belongs to the MurCDEF family.

It is found in the cytoplasm. It catalyses the reaction UDP-N-acetyl-alpha-D-muramate + L-alanine + ATP = UDP-N-acetyl-alpha-D-muramoyl-L-alanine + ADP + phosphate + H(+). It participates in cell wall biogenesis; peptidoglycan biosynthesis. Cell wall formation. In Enterobacter sp. (strain 638), this protein is UDP-N-acetylmuramate--L-alanine ligase.